The chain runs to 43 residues: Augerpeptide hhe9.2 (43 aa).

In terms of domain architecture, EGF-like spans E2–E40. Cystine bridges form between C6/C28, C11/C30, and C17/C39.

Expressed by the venom duct.

Its subcellular location is the secreted. This is Augerpeptide hhe9.2 from Hastula hectica (Sea snail).